Here is a 136-residue protein sequence, read N- to C-terminus: Large-conductance mechanosensitive channel (136 aa).

A run of 2 helical transmembrane segments spans residues 9–29 (AFASRGNVIDMAVGIIIGAAF) and 79–99 (IQTVIDFTIIAFAIFMGLKAI).

It belongs to the MscL family. Homopentamer.

The protein localises to the cell inner membrane. Its function is as follows. Channel that opens in response to stretch forces in the membrane lipid bilayer. May participate in the regulation of osmotic pressure changes within the cell. This Shewanella sp. (strain W3-18-1) protein is Large-conductance mechanosensitive channel.